Consider the following 393-residue polypeptide: Homoserine O-succinyltransferase (393 aa).

In terms of domain architecture, AB hydrolase-1 spans 62–372 (NAVLVCHALN…PHGHDAFLLD (311 aa)). S168 functions as the Nucleophile in the catalytic mechanism. R238 lines the substrate pocket. Residues D333 and H366 contribute to the active site. D367 serves as a coordination point for substrate.

This sequence belongs to the AB hydrolase superfamily. MetX family. Homodimer.

It is found in the cytoplasm. It catalyses the reaction L-homoserine + succinyl-CoA = O-succinyl-L-homoserine + CoA. Its pathway is amino-acid biosynthesis; L-methionine biosynthesis via de novo pathway; O-succinyl-L-homoserine from L-homoserine: step 1/1. In terms of biological role, transfers a succinyl group from succinyl-CoA to L-homoserine, forming succinyl-L-homoserine. The protein is Homoserine O-succinyltransferase of Cupriavidus taiwanensis (strain DSM 17343 / BCRC 17206 / CCUG 44338 / CIP 107171 / LMG 19424 / R1) (Ralstonia taiwanensis (strain LMG 19424)).